A 216-amino-acid chain; its full sequence is Probable GTP-binding protein EngB (216 aa).

An EngB-type G domain is found at 26-200 (EGIEIAFAGR…RAKLDTWFAP (175 aa)). GTP-binding positions include 34–41 (GRSNAGKS), 61–65 (GRTQL), 79–82 (DLPG), 146–149 (TKAD), and 179–181 (YSS). The Mg(2+) site is built by Ser-41 and Thr-63.

Belongs to the TRAFAC class TrmE-Era-EngA-EngB-Septin-like GTPase superfamily. EngB GTPase family. The cofactor is Mg(2+).

Necessary for normal cell division and for the maintenance of normal septation. This Vibrio vulnificus (strain CMCP6) protein is Probable GTP-binding protein EngB.